The primary structure comprises 379 residues: Glutamate 5-kinase (379 aa).

Lys19 serves as a coordination point for ATP. 3 residues coordinate substrate: Ser59, Asp146, and Asn158. Residues 178 to 179 (TD) and 220 to 226 (TGGMATK) contribute to the ATP site. Residues 285-363 (SGDIIIDDGA…KDIISILGHD (79 aa)) form the PUA domain.

The protein belongs to the glutamate 5-kinase family.

It localises to the cytoplasm. It carries out the reaction L-glutamate + ATP = L-glutamyl 5-phosphate + ADP. The protein operates within amino-acid biosynthesis; L-proline biosynthesis; L-glutamate 5-semialdehyde from L-glutamate: step 1/2. Its function is as follows. Catalyzes the transfer of a phosphate group to glutamate to form L-glutamate 5-phosphate. This chain is Glutamate 5-kinase, found in Vibrio parahaemolyticus serotype O3:K6 (strain RIMD 2210633).